A 434-amino-acid polypeptide reads, in one-letter code: Adenylosuccinate synthetase (434 aa).

GTP is bound by residues 22–28 and 50–52; these read GDEGKGK and GHT. Asp23 functions as the Proton acceptor in the catalytic mechanism. 2 residues coordinate Mg(2+): Asp23 and Gly50. IMP is bound by residues 23 to 26, 48 to 51, Thr139, Arg153, Gln234, Thr249, and Arg313; these read DEGK and NAGH. The Proton donor role is filled by His51. 309–315 is a binding site for substrate; the sequence is ATTGRKR. GTP is bound by residues Arg315, 341–343, and 423–425; these read KLD and SVG.

It belongs to the adenylosuccinate synthetase family. Homodimer. It depends on Mg(2+) as a cofactor.

The protein localises to the cytoplasm. The catalysed reaction is IMP + L-aspartate + GTP = N(6)-(1,2-dicarboxyethyl)-AMP + GDP + phosphate + 2 H(+). It participates in purine metabolism; AMP biosynthesis via de novo pathway; AMP from IMP: step 1/2. Its function is as follows. Plays an important role in the de novo pathway of purine nucleotide biosynthesis. Catalyzes the first committed step in the biosynthesis of AMP from IMP. This chain is Adenylosuccinate synthetase, found in Chlorobium phaeobacteroides (strain DSM 266 / SMG 266 / 2430).